A 162-amino-acid chain; its full sequence is Caveolin-2 (162 aa).

The Cytoplasmic portion of the chain corresponds to 1–86; the sequence is MGLETEKADV…FEISKYVMYK (86 aa). Tyr19 is subject to Phosphotyrosine; by SRC. Phosphoserine is present on residues Ser20 and Ser23. The residue at position 27 (Tyr27) is a Phosphotyrosine; by SRC. Position 36 is a phosphoserine (Ser36). The segment at residues 87 to 107 is an intramembrane region (helical); that stretch reads FLTVFLAIPLAFIAGILFATL. The Cytoplasmic portion of the chain corresponds to 108 to 162; the sequence is SCLHIWILMPFVKTCLMVLPSVQTIWKSVTDVFIAPLCTSVGRSFSSVSLQLSQD.

This sequence belongs to the caveolin family. In terms of assembly, monomer or homodimer. Interacts with CAV1; the interaction forms a stable heterooligomeric complex that is required for targeting to lipid rafts and for caveolae formation. Tyrosine phosphorylated forms do not form heterooligomers with the Tyr-19-phosphorylated form existing as a monomer or dimer, and the Tyr-27-form as a monomer only. Interacts (tyrosine phosphorylated form) with the SH2 domain-containing proteins, RASA1, NCK1 and SRC. Interacts (tyrosine phosphorylated form) with INSR, the interaction (Tyr-27-phosphorylated form) is increased on insulin stimulation. Interacts (Tyr-19 phosphorylated form) with MAPK1 (phosphorylated form); the interaction, promoted by insulin, leads to nuclear location and MAPK1 activation. Interacts with STAT3; the interaction is increased on insulin-induced tyrosine phosphorylation leading to STAT activation. Phosphorylated on serine and tyrosine residues. CAV1 promotes phosphorylation on Ser-23 which then targets the complex to the plasma membrane, lipid rafts and caveolae. Phosphorylation on Ser-36 appears to modulate mitosis in endothelial cells. Phosphorylation on both Tyr-19 and Tyr-27 is required for insulin-induced 'Ser-727' phosphorylation of STAT3 and its activation. Phosphorylation on Tyr-19 is required for insulin-induced phosphorylation of MAPK1 and DNA binding of STAT3. Tyrosine phosphorylation is induced by both EGF and insulin (By. similarity).

It is found in the nucleus. The protein localises to the cytoplasm. It localises to the golgi apparatus membrane. Its subcellular location is the cell membrane. The protein resides in the membrane. It is found in the caveola. Its function is as follows. May act as a scaffolding protein within caveolar membranes. Interacts directly with G-protein alpha subunits and can functionally regulate their activity. Acts as an accessory protein in conjunction with CAV1 in targeting to lipid rafts and driving caveolae formation. The Ser-36 phosphorylated form has a role in modulating mitosis in endothelial cells. Positive regulator of cellular mitogenesis of the MAPK signaling pathway. Required for the insulin-stimulated nuclear translocation and activation of MAPK1 and STAT3, and the subsequent regulation of cell cycle progression. This Chlorocebus aethiops (Green monkey) protein is Caveolin-2 (CAV2).